The sequence spans 396 residues: Elongation factor Tu 2 (396 aa).

The tr-type G domain occupies Lys10 to Glu206. A G1 region spans residues Gly19–Thr26. Gly19–Thr26 is a binding site for GTP. Thr26 is a Mg(2+) binding site. The segment at Gly60–Ser64 is G2. Residues Asp81–Gly84 form a G3 region. GTP-binding positions include Asp81–His85 and Asn136–Asp139. The interval Asn136–Asp139 is G4. Residues Ser174–Leu176 are G5.

The protein belongs to the TRAFAC class translation factor GTPase superfamily. Classic translation factor GTPase family. EF-Tu/EF-1A subfamily. Monomer.

It localises to the cytoplasm. It catalyses the reaction GTP + H2O = GDP + phosphate + H(+). Its function is as follows. GTP hydrolase that promotes the GTP-dependent binding of aminoacyl-tRNA to the A-site of ribosomes during protein biosynthesis. The polypeptide is Elongation factor Tu 2 (Rhodospirillum rubrum (strain ATCC 11170 / ATH 1.1.1 / DSM 467 / LMG 4362 / NCIMB 8255 / S1)).